A 282-amino-acid chain; its full sequence is Bis(5'-nucleosyl)-tetraphosphatase, symmetrical (282 aa).

Belongs to the Ap4A hydrolase family.

The catalysed reaction is P(1),P(4)-bis(5'-adenosyl) tetraphosphate + H2O = 2 ADP + 2 H(+). In terms of biological role, hydrolyzes diadenosine 5',5'''-P1,P4-tetraphosphate to yield ADP. This Escherichia coli O127:H6 (strain E2348/69 / EPEC) protein is Bis(5'-nucleosyl)-tetraphosphatase, symmetrical.